The following is a 968-amino-acid chain: RNA polymerase-associated protein RapA (968 aa).

The Helicase ATP-binding domain occupies 163–332 (EVGRRFAPRV…FARLRLLDPD (170 aa)). Position 176 to 183 (176 to 183 (DEVGLGKT)) interacts with ATP. A DEAH box motif is present at residues 278 to 281 (DEAH). Residues 491 to 641 (RVDWLINFLK…AFEQTCPSGH (151 aa)) form the Helicase C-terminal domain.

Belongs to the SNF2/RAD54 helicase family. RapA subfamily. In terms of assembly, interacts with the RNAP. Has a higher affinity for the core RNAP than for the holoenzyme. Its ATPase activity is stimulated by binding to RNAP.

Transcription regulator that activates transcription by stimulating RNA polymerase (RNAP) recycling in case of stress conditions such as supercoiled DNA or high salt concentrations. Probably acts by releasing the RNAP, when it is trapped or immobilized on tightly supercoiled DNA. Does not activate transcription on linear DNA. Probably not involved in DNA repair. The chain is RNA polymerase-associated protein RapA from Shewanella sediminis (strain HAW-EB3).